Reading from the N-terminus, the 381-residue chain is Succinyl-diaminopimelate desuccinylase (381 aa).

His-72 is a Zn(2+) binding site. Residue Asp-74 is part of the active site. Asp-103 contacts Zn(2+). The active-site Proton acceptor is Glu-133. The Zn(2+) site is built by Glu-134, Glu-163, and His-348.

The protein belongs to the peptidase M20A family. DapE subfamily. As to quaternary structure, homodimer. Zn(2+) is required as a cofactor. It depends on Co(2+) as a cofactor.

The catalysed reaction is N-succinyl-(2S,6S)-2,6-diaminopimelate + H2O = (2S,6S)-2,6-diaminopimelate + succinate. It participates in amino-acid biosynthesis; L-lysine biosynthesis via DAP pathway; LL-2,6-diaminopimelate from (S)-tetrahydrodipicolinate (succinylase route): step 3/3. Its function is as follows. Catalyzes the hydrolysis of N-succinyl-L,L-diaminopimelic acid (SDAP), forming succinate and LL-2,6-diaminopimelate (DAP), an intermediate involved in the bacterial biosynthesis of lysine and meso-diaminopimelic acid, an essential component of bacterial cell walls. This chain is Succinyl-diaminopimelate desuccinylase, found in Anaplasma marginale (strain Florida).